The sequence spans 565 residues: NAD-dependent malic enzyme (565 aa).

Tyrosine 104 (proton donor) is an active-site residue. NAD(+) is bound at residue arginine 157. Lysine 175 acts as the Proton acceptor in catalysis. Glutamate 246, aspartate 247, and aspartate 270 together coordinate a divalent metal cation. Residues aspartate 270 and asparagine 418 each coordinate NAD(+).

Belongs to the malic enzymes family. As to quaternary structure, homotetramer. It depends on Mg(2+) as a cofactor. Requires Mn(2+) as cofactor.

The catalysed reaction is (S)-malate + NAD(+) = pyruvate + CO2 + NADH. It carries out the reaction oxaloacetate + H(+) = pyruvate + CO2. The polypeptide is NAD-dependent malic enzyme (Klebsiella pneumoniae subsp. pneumoniae (strain ATCC 700721 / MGH 78578)).